We begin with the raw amino-acid sequence, 256 residues long: Thiazole synthase (256 aa).

Catalysis depends on K95, which acts as the Schiff-base intermediate with DXP. Residues G156, A182–G183, and N204–T205 each bind 1-deoxy-D-xylulose 5-phosphate.

Belongs to the ThiG family. Homotetramer. Forms heterodimers with either ThiH or ThiS.

It is found in the cytoplasm. The catalysed reaction is [ThiS sulfur-carrier protein]-C-terminal-Gly-aminoethanethioate + 2-iminoacetate + 1-deoxy-D-xylulose 5-phosphate = [ThiS sulfur-carrier protein]-C-terminal Gly-Gly + 2-[(2R,5Z)-2-carboxy-4-methylthiazol-5(2H)-ylidene]ethyl phosphate + 2 H2O + H(+). It functions in the pathway cofactor biosynthesis; thiamine diphosphate biosynthesis. Catalyzes the rearrangement of 1-deoxy-D-xylulose 5-phosphate (DXP) to produce the thiazole phosphate moiety of thiamine. Sulfur is provided by the thiocarboxylate moiety of the carrier protein ThiS. In vitro, sulfur can be provided by H(2)S. The sequence is that of Thiazole synthase from Klebsiella pneumoniae (strain 342).